A 263-amino-acid polypeptide reads, in one-letter code: Shikimate dehydrogenase (NADP(+)) (263 aa).

Shikimate-binding positions include 16–18 (SKS) and threonine 65. Catalysis depends on lysine 69, which acts as the Proton acceptor. Residues asparagine 90 and aspartate 105 each coordinate shikimate. NADP(+) is bound by residues 125-129 (GSGGS) and leucine 208. A shikimate-binding site is contributed by tyrosine 210. Glycine 230 serves as a coordination point for NADP(+).

The protein belongs to the shikimate dehydrogenase family. Homodimer.

It carries out the reaction shikimate + NADP(+) = 3-dehydroshikimate + NADPH + H(+). It functions in the pathway metabolic intermediate biosynthesis; chorismate biosynthesis; chorismate from D-erythrose 4-phosphate and phosphoenolpyruvate: step 4/7. With respect to regulation, inhibited by curcumin, 3-(2-naphthyloxy)-4-oxo-2-(trifluoromethyl)-4H-chromen-7-yl 3-chlorobenzoate, butyl 2-{[3-(2-naphthyloxy)-4-oxo-2-(trifluoromethyl)-4H-chromen-7-yl]oxy}propanoate, 2-({2-[(2-{[2-(2,3-dimethylanilino)-2-oxoethyl]sulfanyl}-1,3-benzothiazol-6-yl)amino]-2-oxoethyl}sulfanyl)-N-(2-naphthyl)acetamide, and maesaquinone diacetate. In terms of biological role, involved in the biosynthesis of the chorismate, which leads to the biosynthesis of aromatic amino acids. Catalyzes the reversible NADPH linked reduction of 3-dehydroshikimate (DHSA) to yield shikimate (SA). It can also use NAD to oxidize shikimate. The protein is Shikimate dehydrogenase (NADP(+)) of Helicobacter pylori (Campylobacter pylori).